We begin with the raw amino-acid sequence, 787 residues long: Endonuclease MutS2 (787 aa).

Position 336-343 (336-343) interacts with ATP; it reads GPNTGGKT. The 76-residue stretch at 712–787 folds into the Smr domain; that stretch reads LDLRGVRYED…GNGATEVQFK (76 aa).

It belongs to the DNA mismatch repair MutS family. MutS2 subfamily. In terms of assembly, homodimer. Binds to stalled ribosomes, contacting rRNA.

In terms of biological role, endonuclease that is involved in the suppression of homologous recombination and thus may have a key role in the control of bacterial genetic diversity. Its function is as follows. Acts as a ribosome collision sensor, splitting the ribosome into its 2 subunits. Detects stalled/collided 70S ribosomes which it binds and splits by an ATP-hydrolysis driven conformational change. Acts upstream of the ribosome quality control system (RQC), a ribosome-associated complex that mediates the extraction of incompletely synthesized nascent chains from stalled ribosomes and their subsequent degradation. Probably generates substrates for RQC. The sequence is that of Endonuclease MutS2 from Lactiplantibacillus plantarum (strain ATCC BAA-793 / NCIMB 8826 / WCFS1) (Lactobacillus plantarum).